The following is a 275-amino-acid chain: NH(3)-dependent NAD(+) synthetase (275 aa).

47-54 (GISGGQDS) contacts ATP. D53 contributes to the Mg(2+) binding site. R139 serves as a coordination point for deamido-NAD(+). T159 is an ATP binding site. E164 is a binding site for Mg(2+). 2 residues coordinate deamido-NAD(+): K172 and D179. Positions 188 and 210 each coordinate ATP. Residue 259-260 (HK) coordinates deamido-NAD(+).

Belongs to the NAD synthetase family. As to quaternary structure, homodimer.

The enzyme catalyses deamido-NAD(+) + NH4(+) + ATP = AMP + diphosphate + NAD(+) + H(+). It functions in the pathway cofactor biosynthesis; NAD(+) biosynthesis; NAD(+) from deamido-NAD(+) (ammonia route): step 1/1. In terms of biological role, catalyzes the ATP-dependent amidation of deamido-NAD to form NAD. Uses ammonia as a nitrogen source. The polypeptide is NH(3)-dependent NAD(+) synthetase (Staphylococcus epidermidis (strain ATCC 35984 / DSM 28319 / BCRC 17069 / CCUG 31568 / BM 3577 / RP62A)).